A 293-amino-acid chain; its full sequence is Ribosomal protein L11 methyltransferase (293 aa).

4 residues coordinate S-adenosyl-L-methionine: T145, G166, D188, and N230.

It belongs to the methyltransferase superfamily. PrmA family.

It is found in the cytoplasm. It catalyses the reaction L-lysyl-[protein] + 3 S-adenosyl-L-methionine = N(6),N(6),N(6)-trimethyl-L-lysyl-[protein] + 3 S-adenosyl-L-homocysteine + 3 H(+). Methylates ribosomal protein L11. This chain is Ribosomal protein L11 methyltransferase, found in Serratia proteamaculans (strain 568).